A 277-amino-acid chain; its full sequence is NH(3)-dependent NAD(+) synthetase (277 aa).

G46–S53 contributes to the ATP binding site. Residue D52 coordinates Mg(2+). R142 provides a ligand contact to deamido-NAD(+). Position 162 (T162) interacts with ATP. E167 serves as a coordination point for Mg(2+). K175 and D182 together coordinate deamido-NAD(+). ATP contacts are provided by K191 and T213. Residue H263–K264 coordinates deamido-NAD(+).

It belongs to the NAD synthetase family. As to quaternary structure, homodimer.

The enzyme catalyses deamido-NAD(+) + NH4(+) + ATP = AMP + diphosphate + NAD(+) + H(+). The protein operates within cofactor biosynthesis; NAD(+) biosynthesis; NAD(+) from deamido-NAD(+) (ammonia route): step 1/1. Catalyzes the ATP-dependent amidation of deamido-NAD to form NAD. Uses ammonia as a nitrogen source. The protein is NH(3)-dependent NAD(+) synthetase of Corynebacterium glutamicum (strain R).